Reading from the N-terminus, the 521-residue chain is Potassium/proton antiporter CemA (521 aa).

5 helical membrane-spanning segments follow: residues 68–88 (FVFIIYWSVLECKTSIYLLNI), 294–314 (ALASLQYLGCLILIPWGISFP), 399–419 (ILHLLTDIIYFAIPSASFISG), 446–466 (ILLLTDSCIGFHSPHGWEILI), and 481–501 (IISCFVSTFPVISDTVFKYWI).

The protein belongs to the CemA family.

Its subcellular location is the plastid. It localises to the chloroplast inner membrane. The catalysed reaction is K(+)(in) + H(+)(out) = K(+)(out) + H(+)(in). Contributes to K(+)/H(+) antiport activity by supporting proton efflux to control proton extrusion and homeostasis in chloroplasts in a light-dependent manner to modulate photosynthesis. Prevents excessive induction of non-photochemical quenching (NPQ) under continuous-light conditions. Indirectly promotes efficient inorganic carbon uptake into chloroplasts. This Huperzia lucidula (Shining clubmoss) protein is Potassium/proton antiporter CemA.